A 426-amino-acid polypeptide reads, in one-letter code: Serine--tRNA ligase (426 aa).

235–237 provides a ligand contact to L-serine; sequence TAE. An ATP-binding site is contributed by 266–268; sequence RRE. E289 is a binding site for L-serine. Residue 353 to 356 participates in ATP binding; that stretch reads EISS. S389 is an L-serine binding site.

The protein belongs to the class-II aminoacyl-tRNA synthetase family. Type-1 seryl-tRNA synthetase subfamily. As to quaternary structure, homodimer. The tRNA molecule binds across the dimer.

The protein resides in the cytoplasm. It carries out the reaction tRNA(Ser) + L-serine + ATP = L-seryl-tRNA(Ser) + AMP + diphosphate + H(+). The enzyme catalyses tRNA(Sec) + L-serine + ATP = L-seryl-tRNA(Sec) + AMP + diphosphate + H(+). It functions in the pathway aminoacyl-tRNA biosynthesis; selenocysteinyl-tRNA(Sec) biosynthesis; L-seryl-tRNA(Sec) from L-serine and tRNA(Sec): step 1/1. Functionally, catalyzes the attachment of serine to tRNA(Ser). Is also able to aminoacylate tRNA(Sec) with serine, to form the misacylated tRNA L-seryl-tRNA(Sec), which will be further converted into selenocysteinyl-tRNA(Sec). The polypeptide is Serine--tRNA ligase (Nostoc punctiforme (strain ATCC 29133 / PCC 73102)).